We begin with the raw amino-acid sequence, 585 residues long: DNA mismatch repair protein MutL (585 aa).

The protein belongs to the DNA mismatch repair MutL/HexB family.

Functionally, this protein is involved in the repair of mismatches in DNA. It is required for dam-dependent methyl-directed DNA mismatch repair. May act as a 'molecular matchmaker', a protein that promotes the formation of a stable complex between two or more DNA-binding proteins in an ATP-dependent manner without itself being part of a final effector complex. The protein is DNA mismatch repair protein MutL of Methanoculleus marisnigri (strain ATCC 35101 / DSM 1498 / JR1).